Reading from the N-terminus, the 326-residue chain is Vitamin B12 import system permease protein BtuC (326 aa).

9 helical membrane-spanning segments follow: residues 15–35 (WLLS…CAGE), 61–81 (LAVL…QALF), 88–108 (PGLL…VLLG), 112–132 (LPGW…TLIL), 146–166 (LLAG…AIYF), 184–204 (GGVD…LIWI), 240–260 (GWMV…GLVI), 274–294 (VLLP…DVVA), and 302–322 (ELPI…WLLL).

The protein belongs to the binding-protein-dependent transport system permease family. FecCD subfamily. The complex is composed of two ATP-binding proteins (BtuD), two transmembrane proteins (BtuC) and a solute-binding protein (BtuF).

It localises to the cell inner membrane. Part of the ABC transporter complex BtuCDF involved in vitamin B12 import. Involved in the translocation of the substrate across the membrane. The protein is Vitamin B12 import system permease protein BtuC of Salmonella agona (strain SL483).